The sequence spans 108 residues: SPbeta prophage-derived uncharacterized HTH-type transcriptional regulator YonR (108 aa).

Positions 6–60 (LKKCRTSKGYSQQRMADFLGITRQGYGKYEIGKAEPDLKTLTKLSNILGVSTDFL) constitute an HTH cro/C1-type domain. The H-T-H motif DNA-binding region spans 17–36 (QQRMADFLGITRQGYGKYEI).

The polypeptide is SPbeta prophage-derived uncharacterized HTH-type transcriptional regulator YonR (yonR) (Bacillus subtilis (strain 168)).